We begin with the raw amino-acid sequence, 341 residues long: tRNA N6-adenosine threonylcarbamoyltransferase (341 aa).

Fe cation contacts are provided by His-112 and His-116. Substrate contacts are provided by residues 134 to 138, Asp-167, Gly-180, and Asn-279; that span reads LASGG. Asp-307 contributes to the Fe cation binding site.

This sequence belongs to the KAE1 / TsaD family. Fe(2+) is required as a cofactor.

It localises to the cytoplasm. The catalysed reaction is L-threonylcarbamoyladenylate + adenosine(37) in tRNA = N(6)-L-threonylcarbamoyladenosine(37) in tRNA + AMP + H(+). Required for the formation of a threonylcarbamoyl group on adenosine at position 37 (t(6)A37) in tRNAs that read codons beginning with adenine. Is involved in the transfer of the threonylcarbamoyl moiety of threonylcarbamoyl-AMP (TC-AMP) to the N6 group of A37, together with TsaE and TsaB. TsaD likely plays a direct catalytic role in this reaction. This is tRNA N6-adenosine threonylcarbamoyltransferase from Rickettsia bellii (strain OSU 85-389).